The following is a 489-amino-acid chain: 3-octaprenyl-4-hydroxybenzoate carboxy-lyase (489 aa).

Position 172 (N172) interacts with Mn(2+). Residues 175–177 (IYR), 189–191 (RWL), and 194–195 (RG) each bind prenylated FMN. E238 contacts Mn(2+). D287 acts as the Proton donor in catalysis.

This sequence belongs to the UbiD family. As to quaternary structure, homohexamer. Prenylated FMN serves as cofactor. Mn(2+) is required as a cofactor.

The protein localises to the cell membrane. It carries out the reaction a 4-hydroxy-3-(all-trans-polyprenyl)benzoate + H(+) = a 2-(all-trans-polyprenyl)phenol + CO2. Its pathway is cofactor biosynthesis; ubiquinone biosynthesis. Catalyzes the decarboxylation of 3-octaprenyl-4-hydroxy benzoate to 2-octaprenylphenol, an intermediate step in ubiquinone biosynthesis. This chain is 3-octaprenyl-4-hydroxybenzoate carboxy-lyase, found in Klebsiella pneumoniae (strain 342).